The following is a 326-amino-acid chain: NADH-ubiquinone oxidoreductase chain 1 (326 aa).

9 consecutive transmembrane segments (helical) span residues 1 to 21, 41 to 61, 72 to 92, 104 to 124, 152 to 172, 177 to 197, 234 to 256, 268 to 288, and 303 to 323; these read MFLL…LVAV, PNIV…KLFV, IIIF…SWCV, INIG…GIIT, IGLI…TEIV, SIWF…SILA, YANM…LPPF, VWFG…RSSF, and ILLP…LSFN.

It belongs to the complex I subunit 1 family.

It localises to the mitochondrion inner membrane. It catalyses the reaction a ubiquinone + NADH + 5 H(+)(in) = a ubiquinol + NAD(+) + 4 H(+)(out). Functionally, core subunit of the mitochondrial membrane respiratory chain NADH dehydrogenase (Complex I) that is believed to belong to the minimal assembly required for catalysis. Complex I functions in the transfer of electrons from NADH to the respiratory chain. The immediate electron acceptor for the enzyme is believed to be ubiquinone. This chain is NADH-ubiquinone oxidoreductase chain 1 (ND1), found in Chondrus crispus (Carrageen Irish moss).